We begin with the raw amino-acid sequence, 102 residues long: Large ribosomal subunit protein uL23 (102 aa).

It belongs to the universal ribosomal protein uL23 family. In terms of assembly, part of the 50S ribosomal subunit. Contacts protein L29, and trigger factor when it is bound to the ribosome.

In terms of biological role, one of the early assembly proteins it binds 23S rRNA. One of the proteins that surrounds the polypeptide exit tunnel on the outside of the ribosome. Forms the main docking site for trigger factor binding to the ribosome. This chain is Large ribosomal subunit protein uL23, found in Cutibacterium acnes (strain DSM 16379 / KPA171202) (Propionibacterium acnes).